Reading from the N-terminus, the 275-residue chain is NifU-like protein 5, mitochondrial (275 aa).

Residues 1–61 (MKGLTRLLNS…TNASRNCSRS (61 aa)) constitute a mitochondrion transit peptide.

It belongs to the NifU family.

Its subcellular location is the mitochondrion. In terms of biological role, molecular scaffold for [Fe-S] cluster assembly of mitochondrial iron-sulfur proteins. The sequence is that of NifU-like protein 5, mitochondrial (NIFU5) from Arabidopsis thaliana (Mouse-ear cress).